The sequence spans 395 residues: Chorismate synthase (395 aa).

NADP(+) contacts are provided by Arg40 and Arg46. Positions 99–120 (PREGRNAPLSRPRPGHADLTGM) are disordered. FMN-binding positions include 134–136 (RSS), 256–257 (QA), Gly301, 316–320 (KPIPS), and Arg342.

This sequence belongs to the chorismate synthase family. Homotetramer. Requires FMNH2 as cofactor.

It catalyses the reaction 5-O-(1-carboxyvinyl)-3-phosphoshikimate = chorismate + phosphate. It functions in the pathway metabolic intermediate biosynthesis; chorismate biosynthesis; chorismate from D-erythrose 4-phosphate and phosphoenolpyruvate: step 7/7. Catalyzes the anti-1,4-elimination of the C-3 phosphate and the C-6 proR hydrogen from 5-enolpyruvylshikimate-3-phosphate (EPSP) to yield chorismate, which is the branch point compound that serves as the starting substrate for the three terminal pathways of aromatic amino acid biosynthesis. This reaction introduces a second double bond into the aromatic ring system. This is Chorismate synthase from Bifidobacterium longum (strain DJO10A).